The chain runs to 1049 residues: Self-sufficient cytochrome P450 monooxygenase CYP505E4 (1049 aa).

C405 provides a ligand contact to heme. Polar residues predominate over residues 461-470 (SATALSQHNM). The segment at 461-491 (SATALSQHNMSAGATASPGSSTHLAGDENGQ) is disordered. Over residues 471–482 (SAGATASPGSST) the composition is skewed to low complexity. The Flavodoxin-like domain maps to 499-640 (ISFFYGSNSG…DLEVWEETNL (142 aa)). FMN-binding positions include 505-509 (SNSGT) and 584-616 (VFGC…TRLT). An FAD-binding FR-type domain is found at 678 to 906 (RDLVEGKVTA…RPAKDAFHLP (229 aa)).

This sequence in the N-terminal section; belongs to the cytochrome P450 family. FAD is required as a cofactor. It depends on FMN as a cofactor. The cofactor is heme.

The catalysed reaction is 2 oxidized [cytochrome P450] + NADPH = 2 reduced [cytochrome P450] + NADP(+) + H(+). It catalyses the reaction an organic molecule + reduced [NADPH--hemoprotein reductase] + O2 = an alcohol + oxidized [NADPH--hemoprotein reductase] + H2O + H(+). It carries out the reaction dodecanoate + reduced [NADPH--hemoprotein reductase] + O2 = 5-hydroxydodecanoate + oxidized [NADPH--hemoprotein reductase] + H2O + H(+). The enzyme catalyses dodecan-1-ol + reduced [NADPH--hemoprotein reductase] + O2 = 1,5-dodecanediol + oxidized [NADPH--hemoprotein reductase] + H2O + H(+). The catalysed reaction is dodecanoate + reduced [NADPH--hemoprotein reductase] + O2 = 9-hydroxydodecanoate + oxidized [NADPH--hemoprotein reductase] + H2O + H(+). It catalyses the reaction dodecan-1-ol + reduced [NADPH--hemoprotein reductase] + O2 = 1,4-dodecanediol + oxidized [NADPH--hemoprotein reductase] + H2O + H(+). It carries out the reaction dodecan-1-ol + reduced [NADPH--hemoprotein reductase] + O2 = 1,6-dodecanediol + oxidized [NADPH--hemoprotein reductase] + H2O + H(+). Self-sufficient cytochrome P450 monooxygenase that catalyzes the regioselective in-chain hydroxylation of alkanes, fatty alcohols, and fatty acids at the omega-7 position. Performs hydroxylation of C10-C16 n-alkanes and C12 and C14 fatty alcohols; and thereby enables the one step biocatalytic synthesis of rare alcohols such as 5-dodecanol and 7-tetradecanol. Converts 1-dodecanol into 1,5-dodecanediol as major product with very little sub-terminally hydroxylated products with the 1,4-dodecanediol and 1,6-dodecanediol more abundant. Converts dodecanoic acid to 5-hydroxydodecanoic acid which can be further converted into delta-dodecalactone by lactonization of the 5-hydroxy acid at low pH. Also gives sub-terminal hydroxylation of dodecanoic acid with 9-hydroxydodecanoic acid being the second most abundant product. Does not show any significant activity toward tetradecanoic acid. The chain is Self-sufficient cytochrome P450 monooxygenase CYP505E4 from Penicillium camemberti (strain FM 013).